Here is a 163-residue protein sequence, read N- to C-terminus: MDATSLATLWATIALIIFLGVAIYIKVPGLIAKALDARAARISSELDEARKLRDEAQQLLGQYKKKRKEAEQEAADIVAAAKREAEMLATEAHKKTEDYVIRRTALAEQKIGQAERDAVAEVRASAVDIAVEAARALLAAKVDVKAGADLFKASLADVKAKLN.

The chain crosses the membrane as a helical span at residues 5–25; sequence SLATLWATIALIIFLGVAIYI.

It belongs to the ATPase B chain family. As to quaternary structure, F-type ATPases have 2 components, F(1) - the catalytic core - and F(0) - the membrane proton channel. F(1) has five subunits: alpha(3), beta(3), gamma(1), delta(1), epsilon(1). F(0) has three main subunits: a(1), b(2) and c(10-14). The alpha and beta chains form an alternating ring which encloses part of the gamma chain. F(1) is attached to F(0) by a central stalk formed by the gamma and epsilon chains, while a peripheral stalk is formed by the delta and b chains.

It localises to the cell inner membrane. In terms of biological role, f(1)F(0) ATP synthase produces ATP from ADP in the presence of a proton or sodium gradient. F-type ATPases consist of two structural domains, F(1) containing the extramembraneous catalytic core and F(0) containing the membrane proton channel, linked together by a central stalk and a peripheral stalk. During catalysis, ATP synthesis in the catalytic domain of F(1) is coupled via a rotary mechanism of the central stalk subunits to proton translocation. Functionally, component of the F(0) channel, it forms part of the peripheral stalk, linking F(1) to F(0). This Mesorhizobium japonicum (strain LMG 29417 / CECT 9101 / MAFF 303099) (Mesorhizobium loti (strain MAFF 303099)) protein is ATP synthase subunit b 2.